Consider the following 136-residue polypeptide: Putative covalently bound cell wall protein 22 (136 aa).

Positions 1 to 18 (MQFSTVASIAAIAAVASA) are cleaved as a signal peptide. Residues Asn-21 and Asn-82 are each glycosylated (N-linked (GlcNAc...) asparagine). The segment at 73-110 (PLPTTEAPKNTTSPAPTEKPTEKPTEKPTQQGSSTQTV) is disordered. A compositionally biased stretch (low complexity) spans 99–110 (KPTQQGSSTQTV). The GPI-anchor amidated glycine moiety is linked to residue Gly-115. Positions 116-136 (AAVKALPAAGALLAGAAALLL) are cleaved as a propeptide — removed in mature form.

This sequence belongs to the PGA59 family. The GPI-anchor is attached to the protein in the endoplasmic reticulum and serves to target the protein to the cell surface. There, the glucosamine-inositol phospholipid moiety is cleaved off and the GPI-modified mannoprotein is covalently attached via its lipidless GPI glycan remnant to the 1,6-beta-glucan of the outer cell wall layer.

Its subcellular location is the secreted. It localises to the cell wall. The protein localises to the membrane. Cell wall protein necessary for cell wall integrity. The polypeptide is Putative covalently bound cell wall protein 22 (CCW22) (Saccharomyces cerevisiae (strain ATCC 204508 / S288c) (Baker's yeast)).